We begin with the raw amino-acid sequence, 112 residues long: Keratin-associated protein 12-4 (112 aa).

A run of 15 repeats spans residues 10–14 (CPMAC), 20–24 (CVPST), 25–29 (CYPPE), 35–39 (CCCSA), 41–45 (CVALL), 46–50 (CRPLC), 56–60 (CQPAC), 61–65 (CVPSP), 66–70 (CQVAC), 71–75 (CVPVS), 76–80 (CKPVL), 81–85 (CVASF), 86–90 (CPTSG), 91–95 (CCQPF), and 96–100 (CPTLV). Positions 10–100 (CPMACPGSPC…CCQPFCPTLV (91 aa)) are 15 X 5 AA approximate repeats.

Belongs to the KRTAP type 12 family. As to quaternary structure, interacts with hair keratins. In terms of tissue distribution, restricted to a narrow region of the hair fiber cuticle, lying approximately 20 cell layers above the apex of the dermal papilla of the hair root; not detected in any other tissues.

In terms of biological role, in the hair cortex, hair keratin intermediate filaments are embedded in an interfilamentous matrix, consisting of hair keratin-associated proteins (KRTAP), which are essential for the formation of a rigid and resistant hair shaft through their extensive disulfide bond cross-linking with abundant cysteine residues of hair keratins. The matrix proteins include the high-sulfur and high-glycine-tyrosine keratins. The sequence is that of Keratin-associated protein 12-4 (KRTAP12-4) from Homo sapiens (Human).